The following is a 440-amino-acid chain: MMADEEEEAKHVLQKLQGLVDRLYCFRDSYFETHSVEDAGRKQQDVQEEMEKTLQQMEEVLGSAQVEAQALMLKGKALNVTPDYSPEAEVLLSKAVKLEPELVEAWNQLGEVYWKKGDVASAHTCFSGALTHCKNKVSLQNLSMVLRQLQTDSGDEHSRHVMDSVRQAKLAVQMDVLDGRSWYILGNAYLSLYFNTGQNPKISQQALSAYAQAEKVDRKASSNPDLHLNRATLHKYEESYGEALEGFSQAAALDPVWPEPQQREQQLLEFLSRLTSLLESKGKTKPKKLQSMLGSLRPAHLGPCGDGRYQSASGQKMTLELKPLSTLQPGVNSGTVVLGKVVFSLTTEEKVPFTFGLVDSDGPCYAVMVYNVVQSWGVLIGDSVAIPEPNLRHHQIRHKGKDYSFSSVRVETPLLLVVNGKPQNSSSQASATVASRPQCE.

5 TPR repeats span residues Glu7 to Leu61, Ala68 to Leu98, Val103 to Leu130, Lys136 to Met174, and Gly179 to Val216. A Nuclear export signal motif is present at residues Leu13–Tyr24. Ser203 carries the post-translational modification Phosphoserine; by ATM. At Ser221 the chain carries Phosphoserine; by CHEK2. One copy of the TPR 6 repeat lies at Pro224–Leu253. Residues Lys285–Lys287 form a mediates interaction with 28S rRNA of ribosome-coding tubulin region.

As to quaternary structure, interacts with JMY and p300/EP300; the interaction occurs in the nucleus and augments the association between JMY and p300/EP300 in response to DNA damage. Interacts with PRMT5; the interaction is DNA damage-dependent and promotes PRMT5 interaction with p53/TP53 and subsequent methylation. Forms a complex with HSF1 and p300/EP300; these interactions augment chromatin-bound HSF1 and p300/EP300 histone acetyltransferase activity, resulting in enhanced heat-shock-responsive transcription. Interacts with JMY; the interaction occurs in the cytoplasm and results in the inhibition of JYM's nucleation activity. Interacts with ribosome-coding tubulin (via 60S subunit 28S rRNA and protein uL24/RPL26) and the N-terminal of nascent tubulin polypeptide (via alpha-tubulin MREC motif and beta-tubulin MREI motif); these interactions result in tubulin mRNA-targeted degradation. Interacts with ATP5F1B; the interaction occurs in the mitochondria and results in ATP production decrease. Interacts with p53/TP53; the interaction occurs in the mitochondria and results in increased apoptosis. Post-translationally, phosphorylation by ATM kinase induces nuclear accumulation while interfering with nuclear export, and phosphorylation by CHEK2 kinase enhances nuclear stability. Expressed in heart, brain, spleen, lung, liver, skeletal muscle, kidney and testis.

The protein resides in the nucleus. It localises to the cytoplasm. The protein localises to the cytoplasmic vesicle. It is found in the mitochondrion matrix. Its function is as follows. Cofactor involved in the regulation of various cellular mechanisms such as actin regulation, autophagy, chromatin regulation and DNA repair. In physiological conditions, interacts with cofactor JMY in the cytoplasm which prevents JMY's actin nucleation activity and ability to activate the Arp2/3 complex. Acts as a negative regulator of nutrient stress-induced autophagy by inhibiting JMY's interaction with MAP1LC3B, thereby preventing autophagosome formation. Involves in tubulin autoregulation by promoting its degradation in response to excess soluble tubulin. To do so, associates with the active ribosome near the ribosome exit tunnel and with nascent tubulin polypeptides early during their translation, triggering tubulin mRNA-targeted degradation. Following DNA damage, phosphorylated by DNA damage responsive protein kinases ATM and CHEK2, leading to its nuclear accumulation and stability. Nuclear TTC5/STRAP promotes the assembly of a stress-responsive p53/TP53 coactivator complex, which includes the coactivators JMY and p300, thereby increasing p53/TP53-dependent transcription and apoptosis. Also recruits arginine methyltransferase PRMT5 to p53/TP53 when DNA is damaged, allowing PRMT5 to methylate p53/TP53. In DNA stress conditions, also prevents p53/TP53 degradation by E3 ubiquitin ligase MDM2. Upon heat-shock stress, forms a chromatin-associated complex with heat-shock factor 1 HSF1 and p300/EP300 to stimulate heat-shock-responsive transcription, thereby increasing cell survival. Mitochondrial TTC5/STRAP interacts with ATP synthase subunit beta ATP5F1B which decreased ATP synthase activity and lowers mitochondrial ATP production, thereby regulating cellular respiration and mitochondrial-dependent apoptosis. Mitochondrial TTC5/STRAP also regulates p53/TP53-mediated apoptosis. The chain is Tetratricopeptide repeat protein 5 from Mus musculus (Mouse).